Here is a 705-residue protein sequence, read N- to C-terminus: MLPREEKIIRERLGREPNEVEKAMLEVMWSEHVSYKSSRKWLKLLPTKNEHVILGPGEDAGVVKFDESTWIVIGIESHNHPSAVEPYGGAATGIGGIVRDILCMGARPIALLDPIRFGPLEKEKNRYLFEYVVKGIADYGNRIGVPTVGGETEFDESLDNYTLVNVVCVGIMKPEHLVHSYVTKPGLKLVLVGNRTGRDGIHGVTFASEELSENAEEEDRSAVQIPDPFTEKLLIEATLEAVYTGKVKALKDLGGGGLTCAASEMAGKKGLGAVIYADRVPLREPGMTPLEVMISESQERMLFAVEPEDVEELAKIFEKYELEWAVVGEIIEEPRFVVYWKGDKVADLPIELLTNVPTIEWPMKEYKLEEDVETPDIALSKAFDLVWSSPNIVAKRWVWEQYDHEVQGRTVVKPGFDAAVLKINGEYGLAITSDGNPSYCYLNPYHGAMGTVAEVVRNLVSVGAKPLALVDNLNFASPERPEVYWSFVETVKGLADAAKAFDLAYVSGNVSFYNEVVDRPVKPTPVVAGIGKVKLKDIPRGPRDGDVIALIGSTRRELGGSELYRVLGIKGGIAPRVNLEEEKGNALAILNLIENDLVTFVHDVSRGGVAVALAELSAWFNVGVKAKFTSSFKSIDFAFSESHGRYIITLPEDKVEEAKEIAKISIVGRVGGDNFALEVNGEKVEKDIEELSRIYWNYMYDLLEL.

The active site involves histidine 32. Tyrosine 35 is an ATP binding site. Glutamate 76 lines the Mg(2+) pocket. Substrate contacts are provided by residues 77 to 80 (SHNH) and arginine 99. Histidine 78 functions as the Proton acceptor in the catalytic mechanism. Mg(2+) is bound at residue aspartate 100. Substrate is bound at residue glutamine 224. Aspartate 252 serves as a coordination point for Mg(2+). 296–298 (ESQ) lines the substrate pocket. ATP contacts are provided by aspartate 471 and glycine 508. Asparagine 509 is a Mg(2+) binding site. Serine 511 lines the substrate pocket.

It belongs to the FGAMS family. Monomer. Part of the FGAM synthase complex composed of 1 PurL, 1 PurQ and 2 PurS subunits.

The protein resides in the cytoplasm. It catalyses the reaction N(2)-formyl-N(1)-(5-phospho-beta-D-ribosyl)glycinamide + L-glutamine + ATP + H2O = 2-formamido-N(1)-(5-O-phospho-beta-D-ribosyl)acetamidine + L-glutamate + ADP + phosphate + H(+). The protein operates within purine metabolism; IMP biosynthesis via de novo pathway; 5-amino-1-(5-phospho-D-ribosyl)imidazole from N(2)-formyl-N(1)-(5-phospho-D-ribosyl)glycinamide: step 1/2. In terms of biological role, part of the phosphoribosylformylglycinamidine synthase complex involved in the purines biosynthetic pathway. Catalyzes the ATP-dependent conversion of formylglycinamide ribonucleotide (FGAR) and glutamine to yield formylglycinamidine ribonucleotide (FGAM) and glutamate. The FGAM synthase complex is composed of three subunits. PurQ produces an ammonia molecule by converting glutamine to glutamate. PurL transfers the ammonia molecule to FGAR to form FGAM in an ATP-dependent manner. PurS interacts with PurQ and PurL and is thought to assist in the transfer of the ammonia molecule from PurQ to PurL. The chain is Phosphoribosylformylglycinamidine synthase subunit PurL from Pyrococcus abyssi (strain GE5 / Orsay).